The primary structure comprises 327 residues: Malate dehydrogenase (327 aa).

11-17 provides a ligand contact to NAD(+); that stretch reads GAAGQIS. Positions 92 and 98 each coordinate substrate. Residues Asn-105, Gln-112, and 129–131 contribute to the NAD(+) site; that span reads VGN. Positions 131 and 162 each coordinate substrate. The active-site Proton acceptor is the His-187.

The protein belongs to the LDH/MDH superfamily. MDH type 2 family.

It catalyses the reaction (S)-malate + NAD(+) = oxaloacetate + NADH + H(+). Functionally, catalyzes the reversible oxidation of malate to oxaloacetate. This chain is Malate dehydrogenase, found in Saccharophagus degradans (strain 2-40 / ATCC 43961 / DSM 17024).